Here is a 363-residue protein sequence, read N- to C-terminus: uncharacterized protein (363 aa).

Residue 29 to 36 participates in ATP binding; sequence GSINSGKT.

It belongs to the archaeal ATPase family.

This is an uncharacterized protein from Methanocaldococcus jannaschii (strain ATCC 43067 / DSM 2661 / JAL-1 / JCM 10045 / NBRC 100440) (Methanococcus jannaschii).